Reading from the N-terminus, the 200-residue chain is Holliday junction branch migration complex subunit RuvA (200 aa).

Residues 1-63 (MIASVRGVVT…EDSLTLYGFA (63 aa)) are domain I. Residues 64–142 (DDNAKALFEL…PVPVGGDGAA (79 aa)) form a domain II region. The flexible linker stretch occupies residues 143–151 (GVTTGAWPE). The interval 151-200 (EQVRQALVGLGWTAGQAEQAVAAVAETVDGEVPPVPVLLRQAIRLLGRTR) is domain III.

It belongs to the RuvA family. In terms of assembly, homotetramer. Forms an RuvA(8)-RuvB(12)-Holliday junction (HJ) complex. HJ DNA is sandwiched between 2 RuvA tetramers; dsDNA enters through RuvA and exits via RuvB. An RuvB hexamer assembles on each DNA strand where it exits the tetramer. Each RuvB hexamer is contacted by two RuvA subunits (via domain III) on 2 adjacent RuvB subunits; this complex drives branch migration. In the full resolvosome a probable DNA-RuvA(4)-RuvB(12)-RuvC(2) complex forms which resolves the HJ.

Its subcellular location is the cytoplasm. In terms of biological role, the RuvA-RuvB-RuvC complex processes Holliday junction (HJ) DNA during genetic recombination and DNA repair, while the RuvA-RuvB complex plays an important role in the rescue of blocked DNA replication forks via replication fork reversal (RFR). RuvA specifically binds to HJ cruciform DNA, conferring on it an open structure. The RuvB hexamer acts as an ATP-dependent pump, pulling dsDNA into and through the RuvAB complex. HJ branch migration allows RuvC to scan DNA until it finds its consensus sequence, where it cleaves and resolves the cruciform DNA. This chain is Holliday junction branch migration complex subunit RuvA, found in Salinispora arenicola (strain CNS-205).